A 237-amino-acid polypeptide reads, in one-letter code: MTVLPALPPLDDLETLNVHLETLSAENRVCWALEHGPDHPALSSSFGAQSAVMLHLLTRFAPDITVILVDTGYLFPETYRFADTLTERLKLNLKVYQPLRSGAWTEARHGRLWEQGIDGINQYNTLHKVEPMRRALEELQVGTWFTGLRRGQSSTRTQTSIVQRRDERYKISPIADWTDRDIWEYMKHHDLPYHPLWEQGYVSIGDIHTTRPLEPDMREEDTRFFGFKRECGIHENI.

Catalysis depends on Cys-231, which acts as the Nucleophile; cysteine thiosulfonate intermediate.

This sequence belongs to the PAPS reductase family. CysH subfamily.

The protein localises to the cytoplasm. The catalysed reaction is [thioredoxin]-disulfide + sulfite + adenosine 3',5'-bisphosphate + 2 H(+) = [thioredoxin]-dithiol + 3'-phosphoadenylyl sulfate. The protein operates within sulfur metabolism; hydrogen sulfide biosynthesis; sulfite from sulfate: step 3/3. Functionally, catalyzes the formation of sulfite from phosphoadenosine 5'-phosphosulfate (PAPS) using thioredoxin as an electron donor. In Xylella fastidiosa (strain M23), this protein is Phosphoadenosine 5'-phosphosulfate reductase.